Here is a 421-residue protein sequence, read N- to C-terminus: MGQTFAEQILGHASGRSDVQAGDMVVVNVDLVMMHDSLSPSIIETLHNELGAERVWDRDKVAVVIDHVAPAATVRQAEQQQQVRRWVAQQGISHLFDVGRGISHPVLIEEGLVQPGMLVVGSDSHSTGYGAAAAFGSGMGTTDIALALATGQTWFRVPETVRVNAVGNFQPGVSVKDFGLWAARTLRADGATYQSVEWHGVDFLSWRERMTLATLSIEVGAKAGIVAPTGLGAEHPVPEWLRVEADASYSRVVECDLSTLEPQVSVPHYVDNVVDLADVGRVAVDVVYLGTCTNGHYEDMAAAASILKGRRLAPNVRMIVVPASSESLHRAASDGTLATLLAAGATIGTPGCGACIGRHMGVLAPDEVCVFTGNRNFRGRMGSPGANIYLASPEVAAATAVTGYITHPRNVLDSTEQAVFA.

Residues Cys-292, Cys-352, and Cys-355 each coordinate [4Fe-4S] cluster.

The protein belongs to the aconitase/IPM isomerase family. LeuC type 2 subfamily. Heterodimer of LeuC and LeuD. The cofactor is [4Fe-4S] cluster.

It catalyses the reaction (2R,3S)-3-isopropylmalate = (2S)-2-isopropylmalate. It functions in the pathway amino-acid biosynthesis; L-leucine biosynthesis; L-leucine from 3-methyl-2-oxobutanoate: step 2/4. Catalyzes the isomerization between 2-isopropylmalate and 3-isopropylmalate, via the formation of 2-isopropylmaleate. The polypeptide is 3-isopropylmalate dehydratase large subunit (Herpetosiphon aurantiacus (strain ATCC 23779 / DSM 785 / 114-95)).